The following is a 211-amino-acid chain: Dibenzothiophene metabolism operon protein DoxH (211 aa).

The protein operates within aromatic compound metabolism; naphthalene degradation. Its function is as follows. May be involved in the conversion of 2-hydroxy-4-(2'-oxo-3,5-cyclohexadienyl)-buta-2,4-dienoate to cis-O-hydroxybenzylidenepyruvate. DoxH and doxJ encode different enzymes that may have interchangeable functions. This Pseudomonas sp. (strain C18) protein is Dibenzothiophene metabolism operon protein DoxH (doxH).